A 647-amino-acid polypeptide reads, in one-letter code: Zinc transporter ZIP4 (647 aa).

The signal sequence occupies residues 1–22 (MASLVSLELGLLLAVLVVTATA). Topologically, residues 23–327 (SPPAGLLSLL…QDQLSQSERY (305 aa)) are extracellular. 3 disulfide bridges follow: cysteine 57–cysteine 62, cysteine 65–cysteine 111, and cysteine 160–cysteine 195. A disordered region spans residues 236–255 (EAHSDHSHRHRGASSRDPVP). The N-linked (GlcNAc...) asparagine glycan is linked to asparagine 261. Cysteines 270 and 309 form a disulfide. A helical membrane pass occupies residues 328–348 (LYGSLATLLICLCAVFGLLLL). Over 349–359 (TCTGCRGVTHY) the chain is Cytoplasmic. The chain crosses the membrane as a helical span at residues 360–380 (ILQTFLSLAVGAVTGDAVLHL). The Extracellular segment spans residues 381–402 (TPKVLGLHTHSEEGLSPQPTWR). A helical membrane pass occupies residues 403–423 (LLAMLAGLYAFFLFENLFNLL). Topologically, residues 424-498 (LPRDPEDLED…LSPELRLLPY (75 aa)) are cytoplasmic. The Essential for SLC39A4 endocytosis signature appears at 452 to 454 (LQL). Positions 458-484 (ELRQPKPPHEGSRADLVAEESPELLNP) are disordered. Basic and acidic residues predominate over residues 460 to 470 (RQPKPPHEGSR). Residues 499 to 518 (MITLGDAVHNFADGLAVGAA) traverse the membrane as a helical segment. Positions 507, 508, and 511 each coordinate Zn(2+). Residues 519–526 (FASSWKTG) lie on the Extracellular side of the membrane. Residues 527–553 (LATSLAVFCHELPHELGDFAALLHAGL) form a helical membrane-spanning segment. The Zn(2+) site is built by histidine 536, glutamate 537, and histidine 540. Residues 554–558 (SVRQA) are Cytoplasmic-facing. Residues 559-579 (LLLNLASALTAFAGLYVALAV) traverse the membrane as a helical segment. Residues 580–586 (GVSEESE) lie on the Extracellular side of the membrane. The helical transmembrane segment at 587–607 (AWILAVATGLFLYVALCDMLP) threads the bilayer. Topologically, residues 608–617 (AMLKVRDPRP) are cytoplasmic. The chain crosses the membrane as a helical span at residues 618-638 (WLLFLLHNVGLLGGWTVLLLL). Residues 639–647 (SLYEDDITF) are Extracellular-facing.

It belongs to the ZIP transporter (TC 2.A.5) family. As to quaternary structure, homodimer; homodimerization is mediated by the transmembrane domain. In terms of processing, the extracellular N-terminal ectodomain is cleaved when cells are Zn(2+) deficient, N-terminally cleaved SLC39A4 is internalized at a faster rate. Under excess Zn(2+) conditions, SLC39A4 on the cell surface is rapidly endocytosed, ubiquitinated and degraded. Post-translationally, glycosylated. Highly expressed in kidney, small intestine, stomach, colon, jejunum and duodenum.

Its subcellular location is the cell membrane. It localises to the recycling endosome membrane. It is found in the apical cell membrane. The enzyme catalyses Zn(2+)(in) = Zn(2+)(out). The Zn(2+) uniporter activity is regulated by zinc availability. Extracellular acidification stimulated SLC39A4-dependent Zn(2+) uptake. Its function is as follows. Selective transporter that mediates the uptake of Zn(2+). Plays an essential role for dietary zinc uptake from small intestine. The Zn(2+) uniporter activity is regulated by zinc availability. Also exhibits polyspecific binding and transport of Cu(2+), Cd(2+) and possibly Ni(2+) but at higher concentrations. The polypeptide is Zinc transporter ZIP4 (Homo sapiens (Human)).